The chain runs to 333 residues: PDZ domain-containing protein GIPC1 (333 aa).

The segment covering 1–11 has biased composition (basic residues); it reads MPLGLGRRKKA. The interval 1-53 is disordered; it reads MPLGLGRRKKAPPLVENEEAEPSRSGLGVGEPGPLGGSAAGESQMGLPPPPAA. Over residues 27-39 the composition is skewed to gly residues; sequence LGVGEPGPLGGSA. Phosphoserine is present on Ser68. In terms of domain architecture, PDZ spans 133–213; the sequence is EVEVFKSEEA…GRTFTLKLTE (81 aa). Phosphoserine occurs at positions 222, 225, and 232. Residues 223–244 form a disordered region; sequence QRSAGGHPGSGPQLGTGRGTLR. Residues 228–240 show a composition bias toward gly residues; it reads GHPGSGPQLGTGR. A Phosphothreonine modification is found at Thr242. Ser247 carries the post-translational modification Phosphoserine.

The protein belongs to the GIPC family. As to quaternary structure, interacts with GLUT1 (C-terminus), ACTN1, KIF1B, MYO6 and PLEKHG5. Interacts with RGS19 C-terminus. Interacts with SDC4/syndecan-4 and SEMA4C/semaphorin-4C. As to expression, widely expressed.

It localises to the cytoplasm. Its subcellular location is the membrane. In terms of biological role, inhibits endothelial cell migration (in vitro). May be involved in G protein-linked signaling. The polypeptide is PDZ domain-containing protein GIPC1 (Gipc1) (Mus musculus (Mouse)).